The primary structure comprises 118 residues: Small ribosomal subunit protein eS10 (118 aa).

Residues 91–118 (RLKNAPAERPRPSRGGPRRGGYRGRARD) are disordered. A compositionally biased stretch (basic residues) spans 106–118 (GPRRGGYRGRARD).

This sequence belongs to the eukaryotic ribosomal protein eS10 family. Component of the small ribosomal subunit. Mature ribosomes consist of a small (40S) and a large (60S) subunit. The 40S subunit contains about 32 different proteins and 1 molecule of RNA (18S). The 60S subunit contains 45 different proteins and 3 molecules of RNA (25S, 5.8S and 5S).

It localises to the cytoplasm. In terms of biological role, component of the ribosome, a large ribonucleoprotein complex responsible for the synthesis of proteins in the cell. The small ribosomal subunit (SSU) binds messenger RNAs (mRNAs) and translates the encoded message by selecting cognate aminoacyl-transfer RNA (tRNA) molecules. The large subunit (LSU) contains the ribosomal catalytic site termed the peptidyl transferase center (PTC), which catalyzes the formation of peptide bonds, thereby polymerizing the amino acids delivered by tRNAs into a polypeptide chain. The nascent polypeptides leave the ribosome through a tunnel in the LSU and interact with protein factors that function in enzymatic processing, targeting, and the membrane insertion of nascent chains at the exit of the ribosomal tunnel. The polypeptide is Small ribosomal subunit protein eS10 (RPS10) (Candida albicans (strain SC5314 / ATCC MYA-2876) (Yeast)).